A 720-amino-acid chain; its full sequence is MRYDAFISYSHAADGALAPAVQRGLQRLARRWHRPRALEVFRDQTGLAVSHALWSSIKVALDQSEFFVLLASPEAAASPWVNQEIEHWLSRHSVDRLLPVVTSGEWVWDADAGDVDLERSTAVPPALRGVFGEEPRHLDLRWARAEHELDLRHGRFRDAIAELAAGMHGMSKEDLDGEDVIRHRQMLRMRRGALAVVCALLLLVAGTAVAWRNARGEVTATNVALQRQRAATAAEQHRTEEAADQARSQQQIVEAEQQRAQKAAEEARGQQAVAEAEQQRALRAAGEARRQEGIAAAEQRRAQKAAAEARRQRGVADAEKAKANRAAAEAERQRKIAADEQRKAHEAAAEAERQREEAVKQQRIAIGRRLLGQAGEARDRDPRTAIQLGIAARHIYPGPQSQAGLVETLVRTHYAGTVTGHTAVVSAVALSGDGRTLVTDGLDGTVMVWDPTDRAAPRRLAQLTSSTAPVYTVALSGDGRTLVTGSEDGTAMVWDLTDRAAPRRLAQLTGHTDVVDAVALSGDGRTLATGSFDGTAMVWDVTDRAAPRRLAQLTDHTAPVTAVALSGDGRTLATGSDDHTAMVWDLTDRAAPRRLAQLTGHTAGVDAVALSGDGRTLATGSYDGTAMLWDLTDRAAPRRLAQLTGHTAQVYTVALSRDGRTLATGSEDHTAMVWDLTDRAAPRRLAQLTGHTDAVDAVALSGDGRTLATAASITRRCCGM.

The 131-residue stretch at 1–131 (MRYDAFISYS…AVPPALRGVF (131 aa)) folds into the TIR domain. Residues 10 to 11 (SH) and alanine 48 contribute to the NAD(+) site. Glutamate 84 is an active-site residue. A helical transmembrane segment spans residues 192–211 (GALAVVCALLLLVAGTAVAW). Disordered regions lie at residues 231–275 (ATAA…AVAE) and 292–359 (EGIA…EEAV). Basic and acidic residues-rich tracts occupy residues 256-268 (EQQRAQKAAEEAR) and 307-359 (AEAR…EEAV). A coiled-coil region spans residues 313 to 362 (RGVADAEKAKANRAAAEAERQRKIAADEQRKAHEAAAEAERQREEAVKQQ). 7 WD repeats span residues 420–459 (GHTAVVSAVALSGDGRTLVTDGLDGTVMVWDPTDRAAPRR), 465–504 (SSTAPVYTVALSGDGRTLVTGSEDGTAMVWDLTDRAAPRR), 510–549 (GHTDVVDAVALSGDGRTLATGSFDGTAMVWDVTDRAAPRR), 555–594 (DHTAPVTAVALSGDGRTLATGSDDHTAMVWDLTDRAAPRR), 600–639 (GHTAGVDAVALSGDGRTLATGSYDGTAMLWDLTDRAAPRR), 645–684 (GHTAQVYTVALSRDGRTLATGSEDHTAMVWDLTDRAAPRR), and 690–720 (GHTDAVDAVALSGDGRTLATAASITRRCCGM).

The protein resides in the cell membrane. The catalysed reaction is NAD(+) + H2O = ADP-D-ribose + nicotinamide + H(+). In terms of biological role, NAD(+) hydrolase (NADase) that catalyzes cleavage of NAD(+) into ADP-D-ribose (ADPR) and nicotinamide. The protein is NAD(+) hydrolase ApTIR of Actinoplanes sp. (strain ATCC 31044 / CBS 674.73 / SE50/110).